Reading from the N-terminus, the 215-residue chain is ATP-dependent Clp protease proteolytic subunit 1 (215 aa).

Ser111 acts as the Nucleophile in catalysis. His136 is an active-site residue.

Belongs to the peptidase S14 family. Fourteen ClpP subunits assemble into 2 heptameric rings which stack back to back to give a disk-like structure with a central cavity, resembling the structure of eukaryotic proteasomes.

Its subcellular location is the cytoplasm. It carries out the reaction Hydrolysis of proteins to small peptides in the presence of ATP and magnesium. alpha-casein is the usual test substrate. In the absence of ATP, only oligopeptides shorter than five residues are hydrolyzed (such as succinyl-Leu-Tyr-|-NHMec, and Leu-Tyr-Leu-|-Tyr-Trp, in which cleavage of the -Tyr-|-Leu- and -Tyr-|-Trp bonds also occurs).. Functionally, cleaves peptides in various proteins in a process that requires ATP hydrolysis. Has a chymotrypsin-like activity. Plays a major role in the degradation of misfolded proteins. The sequence is that of ATP-dependent Clp protease proteolytic subunit 1 from Gluconobacter oxydans (strain 621H) (Gluconobacter suboxydans).